We begin with the raw amino-acid sequence, 197 residues long: MARFAVLQLLLPLAAGLTGASFPAQIPTILEEPDTPHYAVHHTVVSASSLSESLKFYVDGLGLDIIRNYNFQGDLTTLFGTNTSVLPGYFLGDTTSVYNGTDGVIYLVEFPDAKKIPTDESDPPNTGLFLTSFWMGDKLNATLDRLDRLGMGGKPHIATFSFGSEPLATYATVRDPDGARVLLVSRPYINSIGKQRP.

The first 19 residues, 1–19, serve as a signal peptide directing secretion; it reads MARFAVLQLLLPLAAGLTG. Residues Asn-82, Asn-99, and Asn-140 are each glycosylated (N-linked (GlcNAc...) asparagine).

The protein belongs to the glyoxalase I family.

Functionally, lactoylglutathione lyase-like protein; part of the gene cluster that mediates the biosynthesis of terrein, a fungal metabolite with ecological, antimicrobial, antiproliferative, and antioxidative activities. The first step in the pathway is performed by the polyketide synthase terA that produces 4-hydroxy-6-methylpyranon (4-HMP), orsellinic acid (OA), and 2,3-dehydro-6-hydroxymellein (2,3-dehydro-6-HM) by condensing acetyl-CoA with two, three, or four malonyl-CoA units, respectively. 4-HMP and OA are not pathway intermediates, but are rather shunt or side products. 2,3-dehydro-6-HM is further converted to 6-hydroxymellein (6-HM) by the 6-hydroxymellein synthase terB. The monooxygenases terC and terD, the multicopper oxidase terE and the Kelch-like protein terF are then involved in the transformation of 6-HM to terrein. Even if they are co-regulated with the other terrein cluster genes, terH and terI seem to be dispensable for terrein production; whereas one or both of the 2 transporters terG and terJ are probably required for efficient secretion of metabolites. This Aspergillus terreus (strain NIH 2624 / FGSC A1156) protein is Lactoylglutathione lyase-like protein terB.